We begin with the raw amino-acid sequence, 851 residues long: Putative serine/threonine-protein kinase 019R (851 aa).

Disordered regions lie at residues 1–24 (MATNYCDEFERNPTRNPRTGRTIK), 61–91 (PRVAAASPCPEFARDPTRNPRTGRPIKRGGP), 104–160 (GGAS…KRGG), 190–216 (GLSPFRSHMRKSPARRSPARRSPARRS), and 340–400 (SRPS…GEPR). Low complexity predominate over residues 125 to 141 (ARRQSPAEAAEASPCPE). Residues 196 to 216 (SHMRKSPARRSPARRSPARRS) are compositionally biased toward basic residues. Positions 340–366 (SRPSGVSRTSGTSGSSGSSASSRPPNS) are enriched in low complexity. The Protein kinase domain occupies 456–851 (AVSDNVIGQG…GEREIESFTM (396 aa)). ATP-binding positions include 462 to 470 (IGQGSWGSV) and lysine 485. The active-site Proton acceptor is aspartate 608.

This sequence belongs to the protein kinase superfamily. Ser/Thr protein kinase family.

It catalyses the reaction L-seryl-[protein] + ATP = O-phospho-L-seryl-[protein] + ADP + H(+). The enzyme catalyses L-threonyl-[protein] + ATP = O-phospho-L-threonyl-[protein] + ADP + H(+). This Dryophytes versicolor (chameleon treefrog) protein is Putative serine/threonine-protein kinase 019R.